Consider the following 305-residue polypeptide: Axin interactor, dorsalization-associated protein A (305 aa).

The axin-binding stretch occupies residues 153-220; that stretch reads GTLLPRLPSE…RKEDTYVHFN (68 aa). In terms of domain architecture, C2 Aida-type spans 156–303; the sequence is LPRLPSEPGM…LYLHLLQTLL (148 aa).

The protein belongs to the AIDA family.

In terms of biological role, acts as a ventralizing factor during embryogenesis. Inhibits axin-mediated JNK activation by binding axin and disrupting axin homodimerization. This in turn antagonizes a Wnt/beta-catenin-independent dorsalization pathway activated by axin/JNK-signaling. The chain is Axin interactor, dorsalization-associated protein A (aida-a) from Xenopus laevis (African clawed frog).